The sequence spans 119 residues: MKKTYRVKREKDFQAIFKDGKSTANRKFVIYHLNRSQDHFRVGISVGKKIGNAVTRNAVKRKIRHVIMALGHQLKSEDFVVIARKGVESLEYQELQQNLHHVLKLAQLLEKGFESEEKH.

This sequence belongs to the RnpA family. In terms of assembly, consists of a catalytic RNA component (M1 or rnpB) and a protein subunit.

It catalyses the reaction Endonucleolytic cleavage of RNA, removing 5'-extranucleotides from tRNA precursor.. In terms of biological role, RNaseP catalyzes the removal of the 5'-leader sequence from pre-tRNA to produce the mature 5'-terminus. It can also cleave other RNA substrates such as 4.5S RNA. The protein component plays an auxiliary but essential role in vivo by binding to the 5'-leader sequence and broadening the substrate specificity of the ribozyme. The chain is Ribonuclease P protein component from Streptococcus pyogenes serotype M5 (strain Manfredo).